Here is a 141-residue protein sequence, read N- to C-terminus: Protein C19orf12 homolog (141 aa).

The chain crosses the membrane as a helical span at residues 37-57; it reads AVAFVGGLVGGPPGLAVGGAV.

It belongs to the C19orf12 family.

Its subcellular location is the mitochondrion. The protein localises to the mitochondrion membrane. It is found in the endoplasmic reticulum. It localises to the cytoplasm. The protein resides in the cytosol. In Bos taurus (Bovine), this protein is Protein C19orf12 homolog.